The sequence spans 107 residues: uncharacterized protein (107 aa).

The stretch at 34–107 forms a coiled coil; the sequence is FASKDKKDEK…SDNQKKDMSY (74 aa).

This is an uncharacterized protein from Dictyostelium discoideum (Social amoeba).